We begin with the raw amino-acid sequence, 355 residues long: Nuclear hormone receptor family member nhr-127 (355 aa).

The segment at residues 10–86 is a DNA-binding region (nuclear receptor); it reads SIPCEVCKNQ…AGMKAEKIQK (77 aa). 2 NR C4-type zinc fingers span residues 13 to 33 and 49 to 69; these read CEVCKNQSNGYHFEVLSCGAC and CKDGKKRCQIRYLDRHFCRYC. Residues 126–355 form the NR LBD domain; sequence NPHNASEGCS…IVQIVQNNFY (230 aa).

This sequence belongs to the nuclear hormone receptor family.

It is found in the nucleus. Its function is as follows. Orphan nuclear receptor. May play a role in modulation of lifespan and immunity. In Caenorhabditis elegans, this protein is Nuclear hormone receptor family member nhr-127 (nhr-127).